A 94-amino-acid chain; its full sequence is Acylphosphatase (94 aa).

Residues 3–90 (RVHVIVEGRV…SDEKQFRIMY (88 aa)) enclose the Acylphosphatase-like domain. Catalysis depends on residues Arg-18 and Asn-36.

Belongs to the acylphosphatase family.

It catalyses the reaction an acyl phosphate + H2O = a carboxylate + phosphate + H(+). This Geobacillus kaustophilus (strain HTA426) protein is Acylphosphatase (acyP).